A 119-amino-acid chain; its full sequence is Large ribosomal subunit protein bL20 (119 aa).

This sequence belongs to the bacterial ribosomal protein bL20 family.

Functionally, binds directly to 23S ribosomal RNA and is necessary for the in vitro assembly process of the 50S ribosomal subunit. It is not involved in the protein synthesizing functions of that subunit. The protein is Large ribosomal subunit protein bL20 of Nitrosomonas eutropha (strain DSM 101675 / C91 / Nm57).